The chain runs to 395 residues: MMSIQRAAQINRQFDYMSIKELWMAKFPLHKPGDCLDMFKNGDYTGPTMGCIQKTKASKKNTIFHIKSDFNSTEYDEPPISGFKMFTQHCCQRIDEHFCGALHPVISNIEFEHNQLKTRPQVASELNLFIPCGIKNLKIESGEKSTWIVGTKFRKCMCLKPVIVAATIIGTPINKNLITFCSSDYIQVIVNRNREGSCGICMGNVSTYEACGNWTNETWGEEFSLDLKLCYKCTPVAFIFSLMMSTGHKPYVSKKQFEENRRKWERVLNYKICKENLDSHLACANHENVYKSIKKYEFFDSVWVYHLANSSWVRDLTRECIESNPGPNYIQLLNEHSQRYGFVQPTYEIIAVVSDGHHSYQCTCYYKDMKTQSTGPSKKNAKHQAAEQMFRHQCF.

The region spanning 328–395 (NYIQLLNEHS…AEQMFRHQCF (68 aa)) is the DRBM domain.

The protein is Non-structural protein 1 of Homo sapiens (Human).